Here is a 332-residue protein sequence, read N- to C-terminus: DNA double-strand break repair nuclease NurA (332 aa).

Residues D57 and D132 each coordinate Mn(2+).

The protein belongs to the NurA family. Requires Mn(2+) as cofactor.

Functionally, involved in DNA double-strand break (DSB) repair. Probably acts with HerA to stimulate resection of the 5' strand and produce the long 3' single-strand that is required for RadA loading. Exhibits both single-stranded endonuclease activity and 5'-3' exonuclease activity on single-stranded and double-stranded DNA. The protein is DNA double-strand break repair nuclease NurA of Sulfolobus acidocaldarius (strain ATCC 33909 / DSM 639 / JCM 8929 / NBRC 15157 / NCIMB 11770).